The primary structure comprises 1147 residues: Myosin heavy chain IB (1147 aa).

Residues 9–677 (RGVDDLVLMP…TLFHLEECLD (669 aa)) enclose the Myosin motor domain. 103–110 (GESGAGKT) serves as a coordination point for ATP. S315 bears the Phosphoserine mark. The actin-binding stretch occupies residues 551–573 (CDALMEALSRCSPHYIRCIKPND). The TH1 domain occupies 715–900 (KERQRHSVNR…RANIQIGIAT (186 aa)). 2 disordered regions span residues 901-954 (GLPK…YSQP) and 969-1089 (AAVP…APAA). Composition is skewed to gly residues over residues 916-951 (SGGG…GGGY) and 975-1079 (GRGG…GAGR). The SH3 domain occupies 1090 to 1147 (PAKPQVKALYDYDAQTGDELTFKEGDTIIVHQKDPAGWWEGELNGKRGWVPANYVQDI).

The protein belongs to the TRAFAC class myosin-kinesin ATPase superfamily. Myosin family. In terms of assembly, myosin I heavy chain is single-headed. Dimer of a heavy and a light chain. Inability to self-assemble into filaments.

Myosin is a protein that binds to F-actin and has ATPase activity that is activated by F-actin. This Acanthamoeba castellanii (Amoeba) protein is Myosin heavy chain IB (MIB).